Here is a 465-residue protein sequence, read N- to C-terminus: 23S rRNA (uracil(1939)-C(5))-methyltransferase RlmD (465 aa).

The tract at residues 1–22 is disordered; the sequence is MSEAVPTSARKSRNAPVAPGPA. The TRAM domain occupies 16-80; that stretch reads PVAPGPAPVL…PSYEQATVVD (65 aa). [4Fe-4S] cluster contacts are provided by cysteine 93, cysteine 99, cysteine 102, and cysteine 181. S-adenosyl-L-methionine contacts are provided by glutamine 289, phenylalanine 318, asparagine 323, glutamate 339, asparagine 367, and aspartate 388. Cysteine 421 (nucleophile) is an active-site residue.

This sequence belongs to the class I-like SAM-binding methyltransferase superfamily. RNA M5U methyltransferase family. RlmD subfamily.

The enzyme catalyses uridine(1939) in 23S rRNA + S-adenosyl-L-methionine = 5-methyluridine(1939) in 23S rRNA + S-adenosyl-L-homocysteine + H(+). Functionally, catalyzes the formation of 5-methyl-uridine at position 1939 (m5U1939) in 23S rRNA. The protein is 23S rRNA (uracil(1939)-C(5))-methyltransferase RlmD of Burkholderia lata (strain ATCC 17760 / DSM 23089 / LMG 22485 / NCIMB 9086 / R18194 / 383).